A 180-amino-acid chain; its full sequence is Oligoribonuclease (180 aa).

One can recognise an Exonuclease domain in the interval 7 to 170; it reads LIWIDLEMTG…DDIRESLAEL (164 aa). Tyr128 is an active-site residue.

It belongs to the oligoribonuclease family.

It localises to the cytoplasm. Its function is as follows. 3'-to-5' exoribonuclease specific for small oligoribonucleotides. This is Oligoribonuclease from Pectobacterium atrosepticum (strain SCRI 1043 / ATCC BAA-672) (Erwinia carotovora subsp. atroseptica).